The following is a 318-amino-acid chain: Taste receptor type 2 member 117 (318 aa).

Over 1–16 the chain is Extracellular; that stretch reads MQHNLKTIFVISHSTL. Residues 17–37 traverse the membrane as a helical segment; the sequence is TIILFTELVTGIIGNGFMALV. The Cytoplasmic portion of the chain corresponds to 38-53; sequence HCMDWLRRKKISLVNQ. A helical transmembrane segment spans residues 54–74; it reads ILTALAISRIFQLCLLFISLV. Topologically, residues 75-93 are extracellular; that stretch reads ISFSYPDLTTTSLIKVTCN. A helical membrane pass occupies residues 94–114; the sequence is LWIIVNHFNIWLATCLGIFYF. Residues 115–134 are Cytoplasmic-facing; that stretch reads LKISNFSNSLFLYLKWRVEK. A helical membrane pass occupies residues 135 to 155; that stretch reads VVLVTLLVSLVLLTLNSLLIN. The Extracellular segment spans residues 156–189; it reads LEINICINEYQRNITYSFNSYYHANCHRQMLSLH. Asn168 carries an N-linked (GlcNAc...) asparagine glycan. The chain crosses the membrane as a helical span at residues 190 to 210; the sequence is IIFLSVPFVLSLSTFLLLIFS. Topologically, residues 211 to 238 are cytoplasmic; it reads LGTHHKKMQQHVQGRRDASTMAHFKALQ. The chain crosses the membrane as a helical span at residues 239–259; sequence TVIAFLLLYSIFILSVLVQIW. Over 260–268 the chain is Extracellular; that stretch reads KYELLKKNL. A helical transmembrane segment spans residues 269–289; it reads FILFCQVAYVAFPSFHSYILI. Residues 290–318 lie on the Cytoplasmic side of the membrane; sequence LGDMKMRQACLSVLWWQKFRKNYVEPLDL.

Belongs to the G-protein coupled receptor T2R family.

The protein localises to the membrane. Putative taste receptor which may play a role in the perception of bitterness. This Rattus norvegicus (Rat) protein is Taste receptor type 2 member 117.